A 355-amino-acid chain; its full sequence is Methylxanthine N3-demethylase NdmB (355 aa).

The region spanning 19–131 is the Rieske domain; it reads WHPVCTLNEF…CEVKYDIVWV (113 aa). Residues Cys-64, His-66, Cys-87, and His-90 each coordinate [2Fe-2S] cluster.

[2Fe-2S] cluster serves as cofactor.

It catalyses the reaction theobromine + NADH + O2 + H(+) = 7-methylxanthine + formaldehyde + NAD(+) + H2O. The catalysed reaction is theobromine + NADPH + O2 + H(+) = 7-methylxanthine + formaldehyde + NADP(+) + H2O. It carries out the reaction 3-methylxanthine + NADH + O2 + H(+) = xanthine + formaldehyde + NAD(+) + H2O. The enzyme catalyses 3-methylxanthine + NADPH + O2 + H(+) = xanthine + formaldehyde + NADP(+) + H2O. In terms of biological role, involved in the caffeine degradation, which is the essential first step for assimilating the carbon and nitrogen in caffeine. Catalyzes the N3-demethylation of theobromine to produce 7-methylxanthine and formaldehyde. Also catalyzes the N3-demethylation of 3-methylxanthine, caffeine, and theophylline to xanthine, paraxanthine, and 1-methylxanthine, respectively. NADH is the preferred substrate. The protein is Methylxanthine N3-demethylase NdmB (ndmB) of Pseudomonas putida (Arthrobacter siderocapsulatus).